Reading from the N-terminus, the 354-residue chain is Uroporphyrinogen decarboxylase (354 aa).

Substrate contacts are provided by residues 27 to 31 (RQAGR), Asp-77, Tyr-154, Thr-209, and His-327.

The protein belongs to the uroporphyrinogen decarboxylase family. As to quaternary structure, homodimer.

Its subcellular location is the cytoplasm. The enzyme catalyses uroporphyrinogen III + 4 H(+) = coproporphyrinogen III + 4 CO2. It functions in the pathway porphyrin-containing compound metabolism; protoporphyrin-IX biosynthesis; coproporphyrinogen-III from 5-aminolevulinate: step 4/4. Catalyzes the decarboxylation of four acetate groups of uroporphyrinogen-III to yield coproporphyrinogen-III. In Cronobacter sakazakii (strain ATCC BAA-894) (Enterobacter sakazakii), this protein is Uroporphyrinogen decarboxylase.